The sequence spans 378 residues: tRNA (guanine(37)-N(1))-methyltransferase (378 aa).

Residues His-196, 234-235 (DL), 262-263 (DA), and Asn-282 contribute to the S-adenosyl-L-methionine site.

Belongs to the class I-like SAM-binding methyltransferase superfamily. TRM5/TYW2 family. In terms of assembly, monomer.

The protein localises to the mitochondrion matrix. Its subcellular location is the nucleus. The protein resides in the cytoplasm. It catalyses the reaction guanosine(37) in tRNA + S-adenosyl-L-methionine = N(1)-methylguanosine(37) in tRNA + S-adenosyl-L-homocysteine + H(+). Functionally, specifically methylates the N1 position of guanosine-37 in various cytoplasmic and mitochondrial tRNAs. Methylation is not dependent on the nature of the nucleoside 5' of the target nucleoside. This is the first step in the biosynthesis of wybutosine (yW), a modified base adjacent to the anticodon of tRNAs and required for accurate decoding. The sequence is that of tRNA (guanine(37)-N(1))-methyltransferase from Trichomonas vaginalis (strain ATCC PRA-98 / G3).